The sequence spans 293 residues: 1D-myo-inositol 2-acetamido-2-deoxy-alpha-D-glucopyranoside deacetylase (293 aa).

Positions 16, 19, and 156 each coordinate Zn(2+).

Belongs to the MshB deacetylase family. Zn(2+) is required as a cofactor.

It carries out the reaction 1D-myo-inositol 2-acetamido-2-deoxy-alpha-D-glucopyranoside + H2O = 1D-myo-inositol 2-amino-2-deoxy-alpha-D-glucopyranoside + acetate. Catalyzes the deacetylation of 1D-myo-inositol 2-acetamido-2-deoxy-alpha-D-glucopyranoside (GlcNAc-Ins) in the mycothiol biosynthesis pathway. The protein is 1D-myo-inositol 2-acetamido-2-deoxy-alpha-D-glucopyranoside deacetylase of Nakamurella multipartita (strain ATCC 700099 / DSM 44233 / CIP 104796 / JCM 9543 / NBRC 105858 / Y-104) (Microsphaera multipartita).